Reading from the N-terminus, the 783-residue chain is Cation/H(+) antiporter 2 (783 aa).

12 helical membrane-spanning segments follow: residues 19–39 (LNTMFIQMACILVFSQLFYLL), 43–63 (CGQAGPVAQILAGIVLSPVLL), 81–101 (YYSFFSFALRTSFMFLIGLEV), 121–141 (FVVSGLLSFASLMLFIPLFGI), 145–165 (YFTFFLVLLVTLSNTASPVVV), 186–206 (ALFIELTNVVLYTIIMAFISG), 208–228 (IILELFLFLLATVALILINMV), 242–262 (YLSKAETLVFFIFLLIIGITI), 300–320 (EFVLPVYFGYIGFRFSIIALT), 323–343 (FYLGIVIIVIVTIAGKFIGVI), 355–375 (YWLFLPTILSVKGHVGLLLLD), and 391–411 (MMVAALVITTLVSGVLASFLL).

Belongs to the monovalent cation:proton antiporter 2 (CPA2) transporter (TC 2.A.37) family. CHX (TC 2.A.37.4) subfamily. In terms of tissue distribution, specifically expressed in pollen.

It is found in the membrane. Functionally, may operate as a cation/H(+) antiporter. In Arabidopsis thaliana (Mouse-ear cress), this protein is Cation/H(+) antiporter 2 (CHX2).